A 513-amino-acid chain; its full sequence is MQVNPSEISELIKRRIENFDAAAEARNEGTVVSVGDGICRIHGLADVMFGEMLEFPDDTFGMALNLERDSVGAVLLGDYQHIKEGATVKCTGRILEVPVGDAMLGRVVDALGRPTDGKGPIKTEGSEPIEKVAPGVITREGVDQPVQTGLKAIDSMVPIGRGQRELIIGDRQTGKTAVAVDAIINQKDSGIKCIYVAVGQKNSTVANVVRKLEEHGAMDNTIVVNAGASESAAMQYIAPYAGCAMGEYFRDRGQDALIIYDDLTKQAWAYRQVSLLLRRPPGREAYPGDVFYLHSRLLERASRINAEEVERRTNGEVKGQTGSLTALPIIETQAGDVSAFVPTNVISITDGQIYLETDLFNSGVRPAVNAGLSVSRVGGSAQTKIIKKLGGGVRLALAQYRELAAFSQFASDLDETTRQQLERGKRTMELMKQGQYEPQSVGEMAFVLFAANEGYVDDVENDQVVRFEKALLDYLRAEHAELLQRITETGDYNDEIHAEMQKAMDAFKKNRTW.

169 to 176 contacts ATP; sequence GDRQTGKT.

Belongs to the ATPase alpha/beta chains family. As to quaternary structure, F-type ATPases have 2 components, CF(1) - the catalytic core - and CF(0) - the membrane proton channel. CF(1) has five subunits: alpha(3), beta(3), gamma(1), delta(1), epsilon(1). CF(0) has three main subunits: a(1), b(2) and c(9-12). The alpha and beta chains form an alternating ring which encloses part of the gamma chain. CF(1) is attached to CF(0) by a central stalk formed by the gamma and epsilon chains, while a peripheral stalk is formed by the delta and b chains.

It localises to the cell inner membrane. The catalysed reaction is ATP + H2O + 4 H(+)(in) = ADP + phosphate + 5 H(+)(out). In terms of biological role, produces ATP from ADP in the presence of a proton gradient across the membrane. The alpha chain is a regulatory subunit. The protein is ATP synthase subunit alpha of Halorhodospira halophila (strain DSM 244 / SL1) (Ectothiorhodospira halophila (strain DSM 244 / SL1)).